A 234-amino-acid chain; its full sequence is Uridylate kinase (234 aa).

9-12 (KLSG) provides a ligand contact to ATP. Glycine 51 is a UMP binding site. ATP-binding residues include glycine 52 and arginine 56. UMP contacts are provided by residues aspartate 71 and 132-139 (CGNPFFTT). 3 residues coordinate ATP: threonine 159, tyrosine 165, and aspartate 168.

Belongs to the UMP kinase family. As to quaternary structure, homohexamer.

The protein resides in the cytoplasm. The catalysed reaction is UMP + ATP = UDP + ADP. It participates in pyrimidine metabolism; CTP biosynthesis via de novo pathway; UDP from UMP (UMPK route): step 1/1. Its activity is regulated as follows. Inhibited by UTP. Functionally, catalyzes the reversible phosphorylation of UMP to UDP. The sequence is that of Uridylate kinase from Prochlorococcus marinus (strain MIT 9301).